A 151-amino-acid polypeptide reads, in one-letter code: Transcriptional repressor NrdR (151 aa).

The segment at 3 to 34 is a zinc-finger region; sequence CPKCGSLNDKVLETRQSKEGVVIKRRRECLNC. The 91-residue stretch at 49-139 folds into the ATP-cone domain; that stretch reads IEVIKKNNTV…VFDGFEDIKD (91 aa).

This sequence belongs to the NrdR family. Zn(2+) is required as a cofactor.

In terms of biological role, negatively regulates transcription of bacterial ribonucleotide reductase nrd genes and operons by binding to NrdR-boxes. The chain is Transcriptional repressor NrdR from Sulfurihydrogenibium sp. (strain YO3AOP1).